Here is a 284-residue protein sequence, read N- to C-terminus: Bifunctional protein FolD 1 (284 aa).

Residues 164 to 166 (GRS), Ser-189, and Ile-230 each bind NADP(+).

The protein belongs to the tetrahydrofolate dehydrogenase/cyclohydrolase family. Homodimer.

The enzyme catalyses (6R)-5,10-methylene-5,6,7,8-tetrahydrofolate + NADP(+) = (6R)-5,10-methenyltetrahydrofolate + NADPH. The catalysed reaction is (6R)-5,10-methenyltetrahydrofolate + H2O = (6R)-10-formyltetrahydrofolate + H(+). Its pathway is one-carbon metabolism; tetrahydrofolate interconversion. Functionally, catalyzes the oxidation of 5,10-methylenetetrahydrofolate to 5,10-methenyltetrahydrofolate and then the hydrolysis of 5,10-methenyltetrahydrofolate to 10-formyltetrahydrofolate. This Rubrobacter xylanophilus (strain DSM 9941 / JCM 11954 / NBRC 16129 / PRD-1) protein is Bifunctional protein FolD 1.